We begin with the raw amino-acid sequence, 87 residues long: LYR motif-containing protein 2 (87 aa).

The transit peptide at 1-19 (MGSRLPPAALTLKQFLVRQ) directs the protein to the mitochondrion.

Belongs to the complex I LYR family.

The protein resides in the mitochondrion. Its function is as follows. Involved in efficient integration of the N-module into mitochondrial respiratory chain complex I. This chain is LYR motif-containing protein 2 (lyrm2), found in Xenopus tropicalis (Western clawed frog).